The chain runs to 228 residues: MKLSKDTIAILKNFASINSGILLSQGKFIMTRAVNGTTYAEANISDEIDFDVALYDLNSFLSILSLVSDDAEISMHTDGNIKIADTRSTVYWPAADKSTIVFPNKPIQFPVASVITEIKAEDLQQLLRVSRGLQIDTIAITNKDGKIVINGYNKVEDSGLTRPKYSLTLTDYDGSNNFNFVINMANMKIQPGNYKVMLWGAGDKVAAKFESSQVSYVIAMEADSTHDF.

This sequence belongs to the Tevenvirinae sliding clamp family. As to quaternary structure, homotrimer. Interacts with the viral DNA polymerase; this interaction constitutes the polymerase holoenzyme. Interacts with the sliding-clamp-loader; this interaction allows the sliding-clamp-loader to open the sliding clamp. Interacts with the viral DNA ligase. Part of the replicase complex that includes the DNA polymerase, the polymerase clamp, the clamp loader complex, the single-stranded DNA binding protein, the primase, the helicase and the helicase assembly factor. Interacts with the viral RNA polymerase (RNAP). Part of the transcription activation complex containing host RNAP, the viral RNA polymerase sigma-like factor, the late transcription coactivator, and the sliding clamp.

Sliding clamp that encircles the genomic DNA and links the DNA polymerase to the template to control the processivity of DNA synthesis. Responsible for tethering the catalytic subunit of DNA polymerase to DNA during high-speed replication. Interaction with the sliding-clamp-loader opens the sliding clamp so that it can be loaded around the DNA template. During transcription, encircles the DNA and tethers host RNA polymerase (RNAP) to it. This Escherichia coli (Bacteriophage RB69) protein is Sliding clamp (45).